The following is a 1411-amino-acid chain: DNA-directed RNA polymerase subunit beta' (1411 aa).

The Zn(2+) site is built by Cys-69, Cys-71, Cys-84, and Cys-87. Mg(2+)-binding residues include Asp-461, Asp-463, and Asp-465. Zn(2+) is bound by residues Cys-809, Cys-883, Cys-890, and Cys-893.

This sequence belongs to the RNA polymerase beta' chain family. The RNAP catalytic core consists of 2 alpha, 1 beta, 1 beta' and 1 omega subunit. When a sigma factor is associated with the core the holoenzyme is formed, which can initiate transcription. It depends on Mg(2+) as a cofactor. The cofactor is Zn(2+).

It carries out the reaction RNA(n) + a ribonucleoside 5'-triphosphate = RNA(n+1) + diphosphate. DNA-dependent RNA polymerase catalyzes the transcription of DNA into RNA using the four ribonucleoside triphosphates as substrates. The chain is DNA-directed RNA polymerase subunit beta' from Ehrlichia ruminantium (strain Welgevonden).